The sequence spans 699 residues: D-(-)-3-hydroxybutyrate oligomer hydrolase (699 aa).

The signal sequence occupies residues 1–33; it reads MTAIRGGSRRAPGLALALLGGVLLGACHGDENA. Ser311 serves as the catalytic Charge relay system.

The protein belongs to the D-(-)-3-hydroxybutyrate oligomer hydrolase family.

Its subcellular location is the secreted. The enzyme catalyses (3R)-hydroxybutanoate dimer + H2O = 2 (R)-3-hydroxybutanoate + H(+). It functions in the pathway lipid metabolism; butanoate metabolism. Participates in the degradation of poly-3-hydroxybutyrate (PHB). It works downstream of poly(3-hydroxybutyrate) depolymerase, hydrolyzing D(-)-3-hydroxybutyrate oligomers of various length (3HB-oligomers) into 3HB-monomers. In Burkholderia mallei (strain ATCC 23344), this protein is D-(-)-3-hydroxybutyrate oligomer hydrolase.